Reading from the N-terminus, the 668-residue chain is Probable potassium transport system protein Kup (668 aa).

Transmembrane regions (helical) follow at residues 17–37, 59–79, 104–124, 148–168, 175–195, 221–241, 256–276, 299–319, 350–370, 380–400, 403–423, and 430–450; these read GILVAMGVVYGDIGTSPLYVM, VSLIFWTLTILTTIKYVVIAL, IIPAMIGGAALLADGVLTPAV, TIIVVITLTIILILFSVQRFG, AFGPIMFLWFTFLGIIGLMNF, LGLFILGNIFLATTGAEALYS, PYIKICLILNYLGQAAWLLTV, ILVFGVVFATIAAVIASQALI, MYIPAVNLILWLACSAIVLAF, YGLSITITMLMTTILLLFYLL, IPAWSAYLISLFFAAIEVVFF, and FFHGGYVAVGMAVFLLCIMII.

Belongs to the HAK/KUP transporter (TC 2.A.72) family.

It is found in the cell membrane. The catalysed reaction is K(+)(in) + H(+)(in) = K(+)(out) + H(+)(out). Its function is as follows. Transport of potassium into the cell. Likely operates as a K(+):H(+) symporter. The protein is Probable potassium transport system protein Kup of Enterococcus faecalis (strain ATCC 700802 / V583).